The chain runs to 341 residues: Beta-ketoacyl-[acyl-carrier-protein] synthase III 1 (341 aa).

Active-site residues include Cys113 and His249. The segment at 250–254 (QANIR) is ACP-binding. Residue Asn279 is part of the active site.

Belongs to the thiolase-like superfamily. FabH family. In terms of assembly, homodimer.

Its subcellular location is the cytoplasm. It carries out the reaction malonyl-[ACP] + acetyl-CoA + H(+) = 3-oxobutanoyl-[ACP] + CO2 + CoA. It functions in the pathway lipid metabolism; fatty acid biosynthesis. Catalyzes the condensation reaction of fatty acid synthesis by the addition to an acyl acceptor of two carbons from malonyl-ACP. Catalyzes the first condensation reaction which initiates fatty acid synthesis and may therefore play a role in governing the total rate of fatty acid production. Possesses both acetoacetyl-ACP synthase and acetyl transacylase activities. Its substrate specificity determines the biosynthesis of branched-chain and/or straight-chain of fatty acids. The chain is Beta-ketoacyl-[acyl-carrier-protein] synthase III 1 from Deinococcus radiodurans (strain ATCC 13939 / DSM 20539 / JCM 16871 / CCUG 27074 / LMG 4051 / NBRC 15346 / NCIMB 9279 / VKM B-1422 / R1).